We begin with the raw amino-acid sequence, 261 residues long: Cytochrome c oxidase subunit 3 (261 aa).

The Mitochondrial matrix portion of the chain corresponds to 1–15 (MTHQTHAYHMVNPSP). A helical membrane pass occupies residues 16-34 (WPLTGALSALLMTSGLIMW). The Mitochondrial intermembrane segment spans residues 35-40 (FHYNSM). The chain crosses the membrane as a helical span at residues 41–66 (SLLTLGFTTNLLTMYQWWRDVIREGT). Residues 67 to 72 (FQGHHT) are Mitochondrial matrix-facing. The chain crosses the membrane as a helical span at residues 73–105 (PIVQKGLRYGMVLFIVSEVFFFAGFFWAFYHSS). Residues 106 to 128 (LAPTPELGGCWPPTGIIPLNPLE) lie on the Mitochondrial intermembrane side of the membrane. The helical transmembrane segment at 129–152 (VPLLNTSVLLASGVSITWAHHSLM) threads the bilayer. At 153–155 (EGN) the chain is on the mitochondrial matrix side. Residues 156–183 (RKHMLQALFITISLGVYFTLLQASEYYE) form a helical membrane-spanning segment. Residues 184–190 (TSFTISD) lie on the Mitochondrial intermembrane side of the membrane. Residues 191–223 (GVYGSTFFMATGFHGLHVIIGSTFLIVCFLRQL) form a helical membrane-spanning segment. Residues 224–232 (YYHFTSNHH) lie on the Mitochondrial matrix side of the membrane. Residues 233 to 256 (FGFEAAAWYWHFVDVVWLFLYVSI) form a helical membrane-spanning segment. At 257 to 261 (YWWGS) the chain is on the mitochondrial intermembrane side.

Belongs to the cytochrome c oxidase subunit 3 family. Component of the cytochrome c oxidase (complex IV, CIV), a multisubunit enzyme composed of 14 subunits. The complex is composed of a catalytic core of 3 subunits MT-CO1, MT-CO2 and MT-CO3, encoded in the mitochondrial DNA, and 11 supernumerary subunits COX4I, COX5A, COX5B, COX6A, COX6B, COX6C, COX7A, COX7B, COX7C, COX8 and NDUFA4, which are encoded in the nuclear genome. The complex exists as a monomer or a dimer and forms supercomplexes (SCs) in the inner mitochondrial membrane with NADH-ubiquinone oxidoreductase (complex I, CI) and ubiquinol-cytochrome c oxidoreductase (cytochrome b-c1 complex, complex III, CIII), resulting in different assemblies (supercomplex SCI(1)III(2)IV(1) and megacomplex MCI(2)III(2)IV(2)).

The protein localises to the mitochondrion inner membrane. It catalyses the reaction 4 Fe(II)-[cytochrome c] + O2 + 8 H(+)(in) = 4 Fe(III)-[cytochrome c] + 2 H2O + 4 H(+)(out). Functionally, component of the cytochrome c oxidase, the last enzyme in the mitochondrial electron transport chain which drives oxidative phosphorylation. The respiratory chain contains 3 multisubunit complexes succinate dehydrogenase (complex II, CII), ubiquinol-cytochrome c oxidoreductase (cytochrome b-c1 complex, complex III, CIII) and cytochrome c oxidase (complex IV, CIV), that cooperate to transfer electrons derived from NADH and succinate to molecular oxygen, creating an electrochemical gradient over the inner membrane that drives transmembrane transport and the ATP synthase. Cytochrome c oxidase is the component of the respiratory chain that catalyzes the reduction of oxygen to water. Electrons originating from reduced cytochrome c in the intermembrane space (IMS) are transferred via the dinuclear copper A center (CU(A)) of subunit 2 and heme A of subunit 1 to the active site in subunit 1, a binuclear center (BNC) formed by heme A3 and copper B (CU(B)). The BNC reduces molecular oxygen to 2 water molecules using 4 electrons from cytochrome c in the IMS and 4 protons from the mitochondrial matrix. In Canis lupus (Gray wolf), this protein is Cytochrome c oxidase subunit 3 (MT-CO3).